Reading from the N-terminus, the 239-residue chain is tRNA (guanine-N(1)-)-methyltransferase (239 aa).

Residues glycine 108 and 127 to 132 contribute to the S-adenosyl-L-methionine site; that span reads IGDYVL.

It belongs to the RNA methyltransferase TrmD family. Homodimer.

Its subcellular location is the cytoplasm. The catalysed reaction is guanosine(37) in tRNA + S-adenosyl-L-methionine = N(1)-methylguanosine(37) in tRNA + S-adenosyl-L-homocysteine + H(+). Functionally, specifically methylates guanosine-37 in various tRNAs. This is tRNA (guanine-N(1)-)-methyltransferase from Lactobacillus helveticus (strain DPC 4571).